A 449-amino-acid chain; its full sequence is Aspartyl protease AED3 (449 aa).

The first 23 residues, 1–23, serve as a signal peptide directing secretion; that stretch reads MASSSLHFFFFLTLLLPFTFTTA. A Peptidase A1 domain is found at 104–444; it reads YVVRAKLGTP…DVPNSRIGIA (341 aa). Aspartate 122 is an active-site residue. Cysteine 132 and cysteine 138 are joined by a disulfide. N-linked (GlcNAc...) asparagine glycosylation is found at asparagine 140, asparagine 148, asparagine 184, asparagine 211, and asparagine 297. Aspartate 328 is an active-site residue. A glycan (N-linked (GlcNAc...) asparagine) is linked at asparagine 353. Cysteine 366 and cysteine 405 are disulfide-bonded.

The protein belongs to the peptidase A1 family.

Its subcellular location is the secreted. The protein resides in the extracellular space. It is found in the apoplast. This chain is Aspartyl protease AED3, found in Arabidopsis thaliana (Mouse-ear cress).